The primary structure comprises 340 residues: Biotin synthase (340 aa).

The 228-residue stretch at 56–283 folds into the Radical SAM core domain; that stretch reads NAVQLSTLLS…KAVVRLSAGR (228 aa). Residues Cys71, Cys75, and Cys78 each contribute to the [4Fe-4S] cluster site. Positions 115, 146, 206, and 278 each coordinate [2Fe-2S] cluster.

Belongs to the radical SAM superfamily. Biotin synthase family. As to quaternary structure, homodimer. Requires [4Fe-4S] cluster as cofactor. The cofactor is [2Fe-2S] cluster.

It catalyses the reaction (4R,5S)-dethiobiotin + (sulfur carrier)-SH + 2 reduced [2Fe-2S]-[ferredoxin] + 2 S-adenosyl-L-methionine = (sulfur carrier)-H + biotin + 2 5'-deoxyadenosine + 2 L-methionine + 2 oxidized [2Fe-2S]-[ferredoxin]. It functions in the pathway cofactor biosynthesis; biotin biosynthesis; biotin from 7,8-diaminononanoate: step 2/2. Catalyzes the conversion of dethiobiotin (DTB) to biotin by the insertion of a sulfur atom into dethiobiotin via a radical-based mechanism. The polypeptide is Biotin synthase (Burkholderia lata (strain ATCC 17760 / DSM 23089 / LMG 22485 / NCIMB 9086 / R18194 / 383)).